The primary structure comprises 842 residues: Cation/H(+) antiporter 20 (842 aa).

A run of 12 helical transmembrane segments spans residues 26–46, 55–75, 86–106, 122–142, 155–175, 193–213, 228–248, 283–303, 320–340, 353–373, 380–400, and 413–433; these read FPLL…LAVL, VIAE…RNMA, MPIL…LVGL, GIAV…AFVI, YAEF…PVLA, MAAA…AVAL, LVSL…LVVI, FATD…GLTI, FVSG…TDVA, LVVV…AVMV, ALTL…VLNI, and AILV…VMAI. Residues 585–595 are compositionally biased toward basic and acidic residues; the sequence is DHGHSHHHQDG. The tract at residues 585-605 is disordered; sequence DHGHSHHHQDGGGDGNVPENV.

The protein belongs to the monovalent cation:proton antiporter 2 (CPA2) transporter (TC 2.A.37) family. CHX (TC 2.A.37.4) subfamily. In terms of tissue distribution, expressed in leaves and stems. Preferentially expressed in guards cells.

Its subcellular location is the endomembrane system. Operates as a K(+)/H(+) antiporter that maintains K(+) homeostasis in guard cells and could regulate pH. Plays a critical role in osmoregulation through the control of stomates opening. This is Cation/H(+) antiporter 20 (CHX20) from Arabidopsis thaliana (Mouse-ear cress).